We begin with the raw amino-acid sequence, 373 residues long: Glutamine synthetase (373 aa).

Alanine 2 is subject to N-acetylalanine. The required for glutamine-induced ubiquitination by CRL4(CRBN) and proteasomal degradation stretch occupies residues 2–25 (ATSASSHLNKGIKQVYMSLPQGEK). 2 positions are modified to N6-acetyllysine: lysine 11 and lysine 14. The GS beta-grasp domain occupies 24–106 (EKVQAMYIWI…VFCEVFKYNR (83 aa)). Tyrosine 104 is subject to Phosphotyrosine. In terms of domain architecture, GS catalytic spans 113–373 (LRHTCKRIMD…TGDEPFQYKN (261 aa)). Glutamate 134 contacts ATP. Residues glutamate 134, glutamate 136, glutamate 196, and glutamate 203 each coordinate Mn(2+). 203 to 208 (EFQIGP) contacts ATP. Residue 246 to 247 (NW) participates in L-glutamate binding. Histidine 253 contributes to the Mn(2+) binding site. Residues 255–257 (NFS), arginine 319, and arginine 324 each bind ATP. Residue arginine 319 coordinates L-glutamate. 336-338 (YFE) provides a ligand contact to ADP. Glutamate 338 serves as a coordination point for Mn(2+). Residue arginine 340 participates in L-glutamate binding. A Phosphoserine modification is found at serine 343.

This sequence belongs to the glutamine synthetase family. In terms of assembly, decamer; composed of two pentamers. Interacts with PALMD. Interacts with RHOJ. Interacts with BEST2; this interaction tethers a fraction of GLUL to the membrane, causing a decrease of cytosolic glutamine synthase (GS) activity and inhibits the chloride channel activity of BEST2 by affecting the gating at the aperture in the absence of intracellular glutamate. Requires Mg(2+) as cofactor. The cofactor is Mn(2+). Post-translationally, palmitoylated; undergoes autopalmitoylation. Acetylated by EP300/p300; acetylation is stimulated by increased glutamine levels and promotes ubiquitin-mediated proteasomal degradation. In terms of processing, ubiquitinated by ZNRF1. Ubiquitinated by the DCX (DDB1-CUL4-X-box) E3 ubiquitin-protein ligase complex called CRL4(CRBN), leading to proteasomal degradation.

It is found in the cytoplasm. It localises to the cytosol. The protein localises to the microsome. Its subcellular location is the mitochondrion. The protein resides in the cell membrane. It carries out the reaction L-glutamate + NH4(+) + ATP = L-glutamine + ADP + phosphate + H(+). The catalysed reaction is L-cysteinyl-[protein] + hexadecanoyl-CoA = S-hexadecanoyl-L-cysteinyl-[protein] + CoA. With respect to regulation, glutamine synthetase activity is inhibited by methionine sulfoximine (MSO). In terms of biological role, glutamine synthetase that catalyzes the ATP-dependent conversion of glutamate and ammonia to glutamine. Its role depends on tissue localization: in the brain, it regulates the levels of toxic ammonia and converts neurotoxic glutamate to harmless glutamine, whereas in the liver, it is one of the enzymes responsible for the removal of ammonia. Plays a key role in ammonium detoxification during erythropoiesis: the glutamine synthetase activity is required to remove ammonium generated by porphobilinogen deaminase (HMBS) during heme biosynthesis to prevent ammonium accumulation and oxidative stress. Essential for proliferation of fetal skin fibroblasts. Independently of its glutamine synthetase activity, required for endothelial cell migration during vascular development. Involved in angiogenesis by regulating membrane localization and activation of the GTPase RHOJ, possibly by promoting RHOJ palmitoylation. May act as a palmitoyltransferase for RHOJ: able to autopalmitoylate and then transfer the palmitoyl group to RHOJ. Plays a role in ribosomal 40S subunit biogenesis. Through the interaction with BEST2, inhibits BEST2 channel activity by affecting the gating at the aperture in the absence of intracellular L-glutamate, but sensitizes BEST2 to intracellular L-glutamate, which promotes the opening of BEST2 and thus relieves its inhibitory effect on BEST2. The chain is Glutamine synthetase from Sus scrofa (Pig).